The following is a 491-amino-acid chain: Ketol-acid reductoisomerase (NADP(+)) (491 aa).

One can recognise a KARI N-terminal Rossmann domain in the interval 15–208 (AQLGKCRFMG…GGHRAGVLES (194 aa)). NADP(+)-binding positions include 45–48 (CGAQ), R68, R76, S78, and 108–110 (DKQ). H132 is a catalytic residue. G158 contacts NADP(+). 2 KARI C-terminal knotted domains span residues 209-344 (SFVA…TAPQ) and 345-484 (YEGK…MTDM). Residues D217, E221, E389, and E393 each contribute to the Mg(2+) site. Position 414 (S414) interacts with substrate.

Belongs to the ketol-acid reductoisomerase family. It depends on Mg(2+) as a cofactor.

The enzyme catalyses (2R)-2,3-dihydroxy-3-methylbutanoate + NADP(+) = (2S)-2-acetolactate + NADPH + H(+). The catalysed reaction is (2R,3R)-2,3-dihydroxy-3-methylpentanoate + NADP(+) = (S)-2-ethyl-2-hydroxy-3-oxobutanoate + NADPH + H(+). It functions in the pathway amino-acid biosynthesis; L-isoleucine biosynthesis; L-isoleucine from 2-oxobutanoate: step 2/4. Its pathway is amino-acid biosynthesis; L-valine biosynthesis; L-valine from pyruvate: step 2/4. Functionally, involved in the biosynthesis of branched-chain amino acids (BCAA). Catalyzes an alkyl-migration followed by a ketol-acid reduction of (S)-2-acetolactate (S2AL) to yield (R)-2,3-dihydroxy-isovalerate. In the isomerase reaction, S2AL is rearranged via a Mg-dependent methyl migration to produce 3-hydroxy-3-methyl-2-ketobutyrate (HMKB). In the reductase reaction, this 2-ketoacid undergoes a metal-dependent reduction by NADPH to yield (R)-2,3-dihydroxy-isovalerate. The sequence is that of Ketol-acid reductoisomerase (NADP(+)) from Salmonella typhimurium (strain LT2 / SGSC1412 / ATCC 700720).